The primary structure comprises 204 residues: Tic20 family protein Ycf60 (204 aa).

4 helical membrane passes run 5–25, 87–107, 133–153, and 159–179; these read LPSL…SFII, LMPL…IFFI, ILLF…PIEF, and GLMM…YSII.

It belongs to the Tic20 family.

Its subcellular location is the plastid. The protein resides in the chloroplast membrane. This chain is Tic20 family protein Ycf60 (ycf60), found in Gracilaria tenuistipitata var. liui (Red alga).